Consider the following 493-residue polypeptide: Poly(ribitol-phosphate) alpha-N-acetylglucosaminyltransferase (493 aa).

UDP-N-acetyl-alpha-D-glucosamine-binding positions include G17, K59, H249, R326, K331, T383, and 403-411 (EGQGLSMIE).

Belongs to the glycosyltransferase group 1 family. In terms of assembly, homotrimer.

It is found in the cytoplasm. It catalyses the reaction 4-O-[(D-ribitylphospho)(n)-di{(2R)-glycerylphospho}]-N-acetyl-beta-D-mannosaminyl-(1-&gt;4)-N-acetyl-alpha-D-glucosaminyl di-trans,octa-cis-undecaprenyl diphosphate + n UDP-N-acetyl-alpha-D-glucosamine = 4-O-([2-N-acetyl-alpha-D-glucosaminyl-1-D-ribitylphospho](n)-di{[2R]-1-glycerylphospho})-N-acetyl-beta-D-mannosaminyl-(1-&gt;4)-N-acetyl-alpha-D-glucosaminyl di-trans,octa-cis-undecaprenyl diphosphate + n UDP + n H(+). It participates in cell wall biogenesis; poly(ribitol phosphate) teichoic acid biosynthesis. Attaches N-acetyl-alpha-D-glucosamine residues to poly(RboP)-wall teichoic acids (WTAs). The polypeptide is Poly(ribitol-phosphate) alpha-N-acetylglucosaminyltransferase (Staphylococcus aureus (strain COL)).